Reading from the N-terminus, the 801-residue chain is MHHRMNEMNLSPVGMEQLTSSSVSNALPVSGSHLGLAASPTHSAIPAPGLPVAIPNLGPSLSSLPSALSLMLPMGIGDRGVMCGLPERNYTLPPPPYPHLESSYFRTILPGILSYLADRPPPQYIHPNSINVDGNTALSITNNPSALDPYQSNGNVGLEPGIVSIDSRSVNTHGAQSLHPSDGHEVALDTAITMENVSRVTSPISTDGMAEELTMDGVAGEHSQIPNGSRSHEPLSVDSVSNNLAADAVGHGGVIPMHGNGLELPVVMETDHIASRVNGMSDSALSDSIHTVAMSTNSVSVALSTSHNLASLESVSLHEVGLSLEPVAVSSITQEVAMGTGHVDVSSDSLSFVSPSLQMEDSNSNKENMATLFTIWCTLCDRAYPSDCPEHGPVTFVPDTPIESRARLSLPKQLVLRQSIVGAEVGVWTGETIPVRTCFGPLIGQQSHSMEVAEWTDKAVNHIWKIYHNGVLEFCIITTDENECNWMMFVRKARNREEQNLVAYPHDGKIFFCTSQDIPPENELLFYYSRDYAQQIGVPEHPDVHLCNCGKECNSYTEFKAHLTSHIHNHLPTQGHSGSHGPSHSKERKWKCSMCPQAFISPSKLHVHFMGHMGMKPHKCDFCSKAFSDPSNLRTHLKIHTGQKNYRCTLCDKSFTQKAHLESHMVIHTGEKNLKCDYCDKLFMRRQDLKQHVLIHTQERQIKCPKCDKLFLRTNHLKKHLNSHEGKRDYVCEKCTKAYLTKYHLTRHLKTCKGPTSSSSAPEEEEEDDSEEEDLADSVGTEDCRINSAVYSADESLSAHK.

The SET domain occupies 412 to 529 (KQLVLRQSIV…PENELLFYYS (118 aa)). The C2H2-type 1; atypical zinc finger occupies 545–566 (HLCNCGKECNSYTEFKAHLTSH). C2H2-type zinc fingers lie at residues 618 to 640 (HKCD…LKIH), 646 to 668 (YRCT…MVIH), 674 to 696 (LKCD…VLIH), and 702 to 724 (IKCP…LNSH). The C2H2-type 6; atypical zinc finger occupies 730–752 (YVCEKCTKAYLTKYHLTRHLKTC). A disordered region spans residues 751 to 782 (TCKGPTSSSSAPEEEEEDDSEEEDLADSVGTE). Acidic residues predominate over residues 762–776 (PEEEEEDDSEEEDLA).

The protein belongs to the class V-like SAM-binding methyltransferase superfamily. As to expression, expressed in many tissues. Highly expressed in ovary, testis, pancreas, brain, heart and prostate.

Its subcellular location is the nucleus. In terms of biological role, may function as a transcription factor involved in cell differentiation. The protein is PR domain zinc finger protein 4 (PRDM4) of Homo sapiens (Human).